The primary structure comprises 1887 residues: Bifunctional serine/threonine-protein kinase/NEDD4-like E3 ubiquitin-protein ligase (1887 aa).

2 disordered regions span residues 19 to 55 (TPQV…TTNF) and 72 to 98 (TDNY…TKEN). Low complexity-rich tracts occupy residues 26–54 (NNSN…STTN) and 72–97 (TDNY…NTKE). RCC1 repeat units follow at residues 206-260 (QGNL…ALTI), 262-314 (GKVY…NNNN), 356-409 (KGLL…VLTN), 411-470 (GLVF…AISD), 472-528 (NDTY…AMSI), and 529-581 (DGSL…IVEK). Residues 299 to 333 (NNNNNNNNNNSTNNNNNNNNDGAQQQFSLSQNSSS) form a disordered region. Disordered regions lie at residues 594 to 619 (LPSS…SDSN), 823 to 858 (VLVH…KNGT), and 1030 to 1088 (DDDN…NNNN). Residues 825–839 (VHQDEKQQQREKSET) are compositionally biased toward basic and acidic residues. The span at 840-852 (ELEEEQDEEEEDS) shows a compositional bias: acidic residues. Low complexity predominate over residues 1036–1088 (ENNSVNNNSNNNNNNNNNNNNNNNNNNNNNNNIDNNINSNSINDSSNNNNNNN). Residues 1158-1437 (YDIIKTLSTH…AHQIAVHPYF (280 aa)) enclose the Protein kinase domain. Residues 1164–1172 (LSTHPHNVY) and Lys1184 contribute to the ATP site. Asp1281 acts as the Proton acceptor in catalysis. In terms of domain architecture, HECT spans 1501–1887 (ESNKLFCRLE…LEYVDGFAFI (387 aa)). The disordered stretch occupies residues 1586–1628 (NNNNNNEENNNNNNNNNNNNNNNNNNNNNNNNNNNNNNNNNEE). The active-site Glycyl thioester intermediate is the Cys1855.

In the N-terminal section; belongs to the protein kinase superfamily. Ser/Thr protein kinase family. The protein in the C-terminal section; belongs to the protein kinase superfamily. CAMK Ser/Thr protein kinase family.

The catalysed reaction is L-seryl-[protein] + ATP = O-phospho-L-seryl-[protein] + ADP + H(+). The enzyme catalyses L-threonyl-[protein] + ATP = O-phospho-L-threonyl-[protein] + ADP + H(+). It catalyses the reaction S-ubiquitinyl-[E2 ubiquitin-conjugating enzyme]-L-cysteine + [acceptor protein]-L-lysine = [E2 ubiquitin-conjugating enzyme]-L-cysteine + N(6)-ubiquitinyl-[acceptor protein]-L-lysine.. The protein operates within protein modification; protein ubiquitination. This chain is Bifunctional serine/threonine-protein kinase/NEDD4-like E3 ubiquitin-protein ligase, found in Dictyostelium discoideum (Social amoeba).